The primary structure comprises 836 residues: Protein translocase subunit SecA (836 aa).

Residues Gln-85, 103-107, and Asp-492 contribute to the ATP site; that span reads GEGKT. The segment at 786–817 is disordered; it reads REQVAKETSTNQGGDDTLKKQPIKKEPKIGRN. Positions 801–816 are enriched in basic and acidic residues; sequence DTLKKQPIKKEPKIGR. Residues Cys-820, Cys-822, Cys-831, and Cys-832 each contribute to the Zn(2+) site.

This sequence belongs to the SecA family. Monomer and homodimer. Part of the essential Sec protein translocation apparatus which comprises SecA, SecYEG and auxiliary proteins SecDF. Other proteins may also be involved. Requires Zn(2+) as cofactor.

It is found in the cell membrane. The protein localises to the cytoplasm. It catalyses the reaction ATP + H2O + cellular proteinSide 1 = ADP + phosphate + cellular proteinSide 2.. Its function is as follows. Part of the Sec protein translocase complex. Interacts with the SecYEG preprotein conducting channel. Has a central role in coupling the hydrolysis of ATP to the transfer of proteins into and across the cell membrane, serving as an ATP-driven molecular motor driving the stepwise translocation of polypeptide chains across the membrane. In Clostridium tetani (strain Massachusetts / E88), this protein is Protein translocase subunit SecA.